We begin with the raw amino-acid sequence, 510 residues long: Histidine ammonia-lyase (510 aa).

The segment at residues 143-145 is a cross-link (5-imidazolinone (Ala-Gly)); the sequence is ASG. Ser-144 is subject to 2,3-didehydroalanine (Ser).

Belongs to the PAL/histidase family. Contains an active site 4-methylidene-imidazol-5-one (MIO), which is formed autocatalytically by cyclization and dehydration of residues Ala-Ser-Gly.

It is found in the cytoplasm. It carries out the reaction L-histidine = trans-urocanate + NH4(+). It participates in amino-acid degradation; L-histidine degradation into L-glutamate; N-formimidoyl-L-glutamate from L-histidine: step 1/3. The protein is Histidine ammonia-lyase of Aliivibrio fischeri (strain MJ11) (Vibrio fischeri).